A 421-amino-acid polypeptide reads, in one-letter code: Aspartokinase (421 aa).

7-10 (KYGG) contributes to the ATP binding site. Position 25-30 (25-30 (RIVATK)) interacts with substrate. Serine 41 contributes to the ATP binding site. Substrate is bound by residues 45-49 (DTTDE), glutamate 74, 125-126 (LD), 151-154 (RGGS), and serine 154. Residues 174–175 (SD), 180–185 (YTADPR), and lysine 210 each bind ATP. ACT domains follow at residues 267 to 343 (VTVL…YDDQ) and 349 to 421 (LVGA…GTGR). Substrate contacts are provided by residues aspartate 274, 274–279 (DKPGEA), 292–294 (NID), glutamine 298, 360–361 (VT), 374–375 (NV), and 381–382 (SE).

The protein belongs to the aspartokinase family. As to quaternary structure, tetramer consisting of 2 isoforms Alpha (catalytic and regulation) and of a homodimer of 2 isoforms Beta (regulation).

The catalysed reaction is L-aspartate + ATP = 4-phospho-L-aspartate + ADP. Its pathway is amino-acid biosynthesis; L-lysine biosynthesis via DAP pathway; (S)-tetrahydrodipicolinate from L-aspartate: step 1/4. It functions in the pathway amino-acid biosynthesis; L-methionine biosynthesis via de novo pathway; L-homoserine from L-aspartate: step 1/3. The protein operates within amino-acid biosynthesis; L-threonine biosynthesis; L-threonine from L-aspartate: step 1/5. Its function is as follows. Catalyzes the phosphorylation of the beta-carboxyl group of aspartic acid with ATP to yield 4-phospho-L-aspartate, which is involved in the branched biosynthetic pathway leading to the biosynthesis of amino acids lysine, threonine, isoleucine and methionine. This Corynebacterium efficiens (strain DSM 44549 / YS-314 / AJ 12310 / JCM 11189 / NBRC 100395) protein is Aspartokinase (lysC).